The chain runs to 97 residues: MARNRLTESEMNEALRALDGWQKVDGREAITRSFKFKDFSTAFGFMAQAALYAEKLDHHPEWFNAYNRVDVTLATHSENGVTELDIKMARKMNAIAG.

The protein belongs to the pterin-4-alpha-carbinolamine dehydratase family.

It carries out the reaction (4aS,6R)-4a-hydroxy-L-erythro-5,6,7,8-tetrahydrobiopterin = (6R)-L-erythro-6,7-dihydrobiopterin + H2O. The sequence is that of Putative pterin-4-alpha-carbinolamine dehydratase from Brucella abortus (strain S19).